The primary structure comprises 255 residues: uncharacterized protein (255 aa).

Belongs to the IIV-6 155L family.

This is an uncharacterized protein from Acheta domesticus (House cricket).